Consider the following 1527-residue polypeptide: MAERANLVFHNKEIDGTAMKRLISRLIDHFGMGYTSHILDQIKTLGFHQATTTSISLGIEDLLTIPSKGWLVQDAEQQSFLLEKHYYYGAIHAVEKLRQSVEIWYATSEYLKQEMNSNFRITDPSNPVYLMSFSGARGNASQVHQLVGMRGLMADPQGQMIHLPIQSNLREGLSLTEYIISCYGARKGVVDTAVRTADAGYLTRRLVEVVQHIIVRRRDCGTIQGISVSPQNGMTEKLFVQTLIGRVLADDIYIGSRCIASRNQDIGIGLVNRFITAFRAQPFRAQPIYIRTPFTCRSTSWICQLCYGRSPTHGDLVELGEAVGIIAGQSIGEPGTQLTLRTFHTGGVFTGGTADLIRSPSNGKIQFNEDLVHPTRTRHGQPAFLCYIDLHVTIQSQDILHSVNIPLKSLILVQNDQYVESEQVIAEIRAGTSTLHFKEKVQKHIYSESDGEMHWSTDVYHAPEYQYGNLRRLPKTSHLWILSVSMCRSSIASFSLHKDQDQMNTYSFSVDGRYIFDFSMANDQVSHRLLDTFGKKDREILDYLTPDRIVFNGHWNCFYPSILQDNSDLLAKKRRNRLVVPLQYHQEQEKERISCLGISMEIPFMGVLRRNTIFAYFDDPRYRKDKRGSGIVKFRYRTLEEEYRTQEEEYRTREEEYRTREEDSEDEYESPENKYRTREGEGEYKILEDEYRTLEDEYETLEDEYGILEDEYRTLEKDSEEEYGSLENKYRTREGEGEYEILEEESEEEYGSSEDGSEKEYGTLEEDSEEDSEEDSEDEYGSPEEDSILKKEGFIEHRGTKEFSLKYQKEVDRFFFILQELHILPRSSSLKVLDNSIIGVDTQLTKNTRSRLGGLVRVKRKKSHTELKIFSGDIHFPEEADKILGGSLIPPEREKKDSKESKKRKNWVYVQRKKFLKSKEKYFVSVRPAVAYEMDEGINLATLFPQDLLQEEDNLQLRLVNFISHENSKLTQRIYHTNSQFVRTCLVVNWEQEEKEGARASLVEVKTNDLIRDFLRIELVKSTILYTRRRYDRTSVGLIPNNRLDRNNTNSFYSKAKIQSLSQHQEVIGTLLNRNKEYPSLMILLASNCSRIGLFKNSKYPNAVKESNPRIPIRDIFGLLGVIVPSISNFSSSYYLLTHNQILLKKYLFLDNLKQTLQVLQGLKYSLIDENKRISNFDSNIMLEPFHLNWHFLHHDSWEETLAIIHLGQFICENLCLFKLHIKKSGQIFIVNMDSFVLRAAKPYLATIGATVHGHYGKILYKGDRLVTFIYEKSRSSDITQGLPKVEQIFEARSIDSLSPNLERRIEDWNERIPRILGVPWGFLIGAELTIAQSRISLVNKIQKVYRSQGVQIHNRHIEIIIRQVTSKVRVSEDGMSNVFLPGELIGLLRAERAGRALDESIYYRAILLGITRASLNTQSFISEASFQETARVLAKAALRGRIDWLKGLKENVVLGGIIPVGTGFQKFVHRSPQDKNLYLEIQKKNLFASEMRDILFLHTELVSSDSDVTNNFYETSETPFTPIYTI.

Zn(2+)-binding residues include C220, C296, C303, and C306. Basic and acidic residues-rich tracts occupy residues 644–661 (RTQEEEYRTREEEYRTRE) and 671–681 (PENKYRTREGE). Disordered stretches follow at residues 644–681 (RTQEEEYRTREEEYRTREEDSEDEYESPENKYRTREGE) and 712–793 (YRTL…KKEG). Acidic residues-rich tracts occupy residues 737 to 755 (GEYEILEEESEEEYGSSED) and 763 to 786 (TLEEDSEEDSEEDSEDEYGSPEED).

Belongs to the RNA polymerase beta' chain family. RpoC2 subfamily. In terms of assembly, in plastids the minimal PEP RNA polymerase catalytic core is composed of four subunits: alpha, beta, beta', and beta''. When a (nuclear-encoded) sigma factor is associated with the core the holoenzyme is formed, which can initiate transcription. Requires Zn(2+) as cofactor.

The protein localises to the plastid. It is found in the chloroplast. It carries out the reaction RNA(n) + a ribonucleoside 5'-triphosphate = RNA(n+1) + diphosphate. Its function is as follows. DNA-dependent RNA polymerase catalyzes the transcription of DNA into RNA using the four ribonucleoside triphosphates as substrates. This Zea mays (Maize) protein is DNA-directed RNA polymerase subunit beta''.